A 620-amino-acid chain; its full sequence is Chaperone protein HscA homolog (620 aa).

This sequence belongs to the heat shock protein 70 family.

Functionally, chaperone involved in the maturation of iron-sulfur cluster-containing proteins. Has a low intrinsic ATPase activity which is markedly stimulated by HscB. In Shewanella sp. (strain ANA-3), this protein is Chaperone protein HscA homolog.